A 109-amino-acid chain; its full sequence is Large ribosomal subunit protein eL30A (109 aa).

Belongs to the eukaryotic ribosomal protein eL30 family. In terms of assembly, component of the large ribosomal subunit (LSU). Mature yeast ribosomes consist of a small (40S) and a large (60S) subunit. The 40S small subunit contains 1 molecule of ribosomal RNA (18S rRNA) and at least 33 different proteins. The large 60S subunit contains 3 rRNA molecules (25S, 5.8S and 5S rRNA) and at least 46 different proteins.

The protein localises to the cytoplasm. Its function is as follows. Component of the ribosome, a large ribonucleoprotein complex responsible for the synthesis of proteins in the cell. The small ribosomal subunit (SSU) binds messenger RNAs (mRNAs) and translates the encoded message by selecting cognate aminoacyl-transfer RNA (tRNA) molecules. The large subunit (LSU) contains the ribosomal catalytic site termed the peptidyl transferase center (PTC), which catalyzes the formation of peptide bonds, thereby polymerizing the amino acids delivered by tRNAs into a polypeptide chain. The nascent polypeptides leave the ribosome through a tunnel in the LSU and interact with protein factors that function in enzymatic processing, targeting, and the membrane insertion of nascent chains at the exit of the ribosomal tunnel. This Schizosaccharomyces pombe (strain 972 / ATCC 24843) (Fission yeast) protein is Large ribosomal subunit protein eL30A (rpl3001).